The following is a 351-amino-acid chain: Protein FAM118B (351 aa).

The residue at position 2 (alanine 2) is an N-acetylalanine. Phosphoserine is present on serine 9.

This sequence belongs to the FAM118 family.

The protein localises to the nucleus. It localises to the cajal body. May play a role in Cajal bodies formation. The polypeptide is Protein FAM118B (FAM118B) (Homo sapiens (Human)).